Here is a 315-residue protein sequence, read N- to C-terminus: Ribosomal RNA small subunit methyltransferase H (315 aa).

S-adenosyl-L-methionine is bound by residues 37–39 (GGH), Asp-57, Phe-83, Asp-105, and Gln-112.

Belongs to the methyltransferase superfamily. RsmH family.

Its subcellular location is the cytoplasm. The catalysed reaction is cytidine(1402) in 16S rRNA + S-adenosyl-L-methionine = N(4)-methylcytidine(1402) in 16S rRNA + S-adenosyl-L-homocysteine + H(+). Specifically methylates the N4 position of cytidine in position 1402 (C1402) of 16S rRNA. This Pseudomonas fluorescens (strain Pf0-1) protein is Ribosomal RNA small subunit methyltransferase H.